The chain runs to 207 residues: dITP/XTP pyrophosphatase (207 aa).

16–21 (SNNKGK) serves as a coordination point for substrate. Catalysis depends on Asp-79, which acts as the Proton acceptor. Asp-79 is a binding site for Mg(2+). Residues Ser-80, 166 to 169 (FGYD), Lys-189, and 194 to 195 (HR) contribute to the substrate site.

Belongs to the HAM1 NTPase family. As to quaternary structure, homodimer. It depends on Mg(2+) as a cofactor.

It carries out the reaction XTP + H2O = XMP + diphosphate + H(+). It catalyses the reaction dITP + H2O = dIMP + diphosphate + H(+). The catalysed reaction is ITP + H2O = IMP + diphosphate + H(+). In terms of biological role, pyrophosphatase that catalyzes the hydrolysis of nucleoside triphosphates to their monophosphate derivatives, with a high preference for the non-canonical purine nucleotides XTP (xanthosine triphosphate), dITP (deoxyinosine triphosphate) and ITP. Seems to function as a house-cleaning enzyme that removes non-canonical purine nucleotides from the nucleotide pool, thus preventing their incorporation into DNA/RNA and avoiding chromosomal lesions. The sequence is that of dITP/XTP pyrophosphatase from Acinetobacter baumannii (strain ATCC 17978 / DSM 105126 / CIP 53.77 / LMG 1025 / NCDC KC755 / 5377).